Here is a 37-residue protein sequence, read N- to C-terminus: Mu-agatoxin-Aa1d (37 aa).

Intrachain disulfides connect cysteine 2/cysteine 18, cysteine 9/cysteine 23, cysteine 17/cysteine 33, and cysteine 25/cysteine 31. Asparagine 37 is subject to Asparagine amide.

This sequence belongs to the neurotoxin 07 (Beta/delta-agtx) family. 03 (aga-4) subfamily. Aga sub-subfamily. In terms of tissue distribution, expressed by the venom gland.

Its subcellular location is the secreted. Insecticidal neurotoxin that induces an irreversible spastic paralysis when injected into insects. Modifies presynaptic voltage-gated sodium channels (Nav), causing them to open at the normal resting potential of the nerve. This leads to spontaneous release of neurotransmitter and repetitive action potentials in motor neurons. The polypeptide is Mu-agatoxin-Aa1d (Agelenopsis aperta (North American funnel-web spider)).